Here is a 277-residue protein sequence, read N- to C-terminus: MKQLYGVIGNPIGHSLSPLMHNDAFEHLGIDAHYHAFLVEEEMLGEAVKGLKALGVSGINVTTPHKVAIMKYLDEIDPLAKQIGAVNTVVHRNGKLVGYNTDGIGYVRSLQAISKEPLRHKRMLLLGAGGACRAIYCSLVAAGVKEIDIANRTVETAKQLIASSKERVVSKALSLEKATEAQENYDVLIQTTTIGMHPHVQHTPMQIGSLKQGAIVSDIIYNPFETKFLHDAKLSGAIVQNGIDMFVYQGALAFEMWTGMMPDINRMKQLVIRKLGG.

Residues 15-17 and Thr62 contribute to the shikimate site; that span reads SLS. Lys66 functions as the Proton acceptor in the catalytic mechanism. Residues Asn87 and Asp102 each contribute to the shikimate site. NADP(+) contacts are provided by residues 127-131 and Ile219; that span reads GAGGA. Residue Tyr221 coordinates shikimate. Residue Gly242 coordinates NADP(+).

It belongs to the shikimate dehydrogenase family. As to quaternary structure, homodimer.

It carries out the reaction shikimate + NADP(+) = 3-dehydroshikimate + NADPH + H(+). It participates in metabolic intermediate biosynthesis; chorismate biosynthesis; chorismate from D-erythrose 4-phosphate and phosphoenolpyruvate: step 4/7. Functionally, involved in the biosynthesis of the chorismate, which leads to the biosynthesis of aromatic amino acids. Catalyzes the reversible NADPH linked reduction of 3-dehydroshikimate (DHSA) to yield shikimate (SA). In Bacillus cytotoxicus (strain DSM 22905 / CIP 110041 / 391-98 / NVH 391-98), this protein is Shikimate dehydrogenase (NADP(+)).